Reading from the N-terminus, the 495-residue chain is Aspartyl/glutamyl-tRNA(Asn/Gln) amidotransferase subunit B (495 aa).

It belongs to the GatB/GatE family. GatB subfamily. Heterotrimer of A, B and C subunits.

It carries out the reaction L-glutamyl-tRNA(Gln) + L-glutamine + ATP + H2O = L-glutaminyl-tRNA(Gln) + L-glutamate + ADP + phosphate + H(+). The enzyme catalyses L-aspartyl-tRNA(Asn) + L-glutamine + ATP + H2O = L-asparaginyl-tRNA(Asn) + L-glutamate + ADP + phosphate + 2 H(+). Its function is as follows. Allows the formation of correctly charged Asn-tRNA(Asn) or Gln-tRNA(Gln) through the transamidation of misacylated Asp-tRNA(Asn) or Glu-tRNA(Gln) in organisms which lack either or both of asparaginyl-tRNA or glutaminyl-tRNA synthetases. The reaction takes place in the presence of glutamine and ATP through an activated phospho-Asp-tRNA(Asn) or phospho-Glu-tRNA(Gln). The sequence is that of Aspartyl/glutamyl-tRNA(Asn/Gln) amidotransferase subunit B from Halobacterium salinarum (strain ATCC 700922 / JCM 11081 / NRC-1) (Halobacterium halobium).